The following is a 735-amino-acid chain: MAGDKQGDKQAETTSVPAEARERHAQLAEQIEEHRFRYYVNDAPVVSDAEFDRLLRTLEELEERHPELRTPESPTQKVAGAYATEFTAVQHPTRMLSLDNTFNDDELAAWFERIARELGEQEYHFLCELKVDGLAVNLTYERGRLVRAATRGDGRTGEDITPNVRTIAEIPDRLAGDKVPDLVEIRGEVYFPMEKFQELNARLNEAGDKPFANARNAAAGSLRQKDPRVTASRPLHMVVHGIGTLEGYSGLTRLSQAYDLLKAWGLPTSPHNRVVDGLDGVREFIAYYGENRHSVAHEIDGVVVKVDEIRLQGRLGSTARAPRWAIAYKYAPEEVNTKLVDIKVGVGRTGRVTPYAQVEPVTVAGSEVEFATLHNQEVVKAKGVLIGDTVVLRKAGDVIPEILGPVADLRDGSEREFVMPAECPECGTPLKAMKEGDIDLRCPNARACPAQLRERVAYLAGRECLDIEHFGGVVAAALTGPLEPSEPPLVDEGDLFDLTVEKLLPIKAYVLDPDSGLPKRDPKTGEEKIATVFANKEGEPKKNTLALLQHIEEAKTRPLARFINGLSIRYVGPVAAQALAREFRSIDRIEQATEEELASTDGVGGAIATAVKEWFAVDWHREIVRKWKAAGVPLEDRSTGEDEGPRPLEGLTVVVTGTLENFTRDGAKEALQSRGAKVTGSVSKKTSFVVVGDNPGSKYDKAMQLKVPVLNEDGFAVLLEQGPEAAADVALSAEE.

Over residues 1-11 the composition is skewed to basic and acidic residues; the sequence is MAGDKQGDKQA. Residues 1-23 form a disordered region; sequence MAGDKQGDKQAETTSVPAEARER. NAD(+) is bound by residues 48 to 52, 97 to 98, and Glu-128; these read DAEFD and SL. Lys-130 functions as the N6-AMP-lysine intermediate in the catalytic mechanism. Residues Arg-151, Glu-188, Lys-305, and Lys-329 each coordinate NAD(+). Zn(2+) is bound by residues Cys-423, Cys-426, Cys-442, and Cys-448. One can recognise a BRCT domain in the interval 643-732; that stretch reads EGPRPLEGLT…PEAAADVALS (90 aa).

Belongs to the NAD-dependent DNA ligase family. LigA subfamily. Mg(2+) is required as a cofactor. Mn(2+) serves as cofactor.

The catalysed reaction is NAD(+) + (deoxyribonucleotide)n-3'-hydroxyl + 5'-phospho-(deoxyribonucleotide)m = (deoxyribonucleotide)n+m + AMP + beta-nicotinamide D-nucleotide.. Its function is as follows. DNA ligase that catalyzes the formation of phosphodiester linkages between 5'-phosphoryl and 3'-hydroxyl groups in double-stranded DNA using NAD as a coenzyme and as the energy source for the reaction. It is essential for DNA replication and repair of damaged DNA. This is DNA ligase 1 from Streptomyces coelicolor (strain ATCC BAA-471 / A3(2) / M145).